The chain runs to 357 residues: 3-isopropylmalate dehydrogenase (357 aa).

76 to 89 lines the NAD(+) pocket; sequence GPQWDTIDPALRPE. Positions 96, 106, 134, and 224 each coordinate substrate. Asp224, Asp248, and Asp252 together coordinate Mg(2+). Position 282–294 (282–294) interacts with NAD(+); that stretch reads GSAPDIAGQGIAN.

This sequence belongs to the isocitrate and isopropylmalate dehydrogenases family. LeuB type 1 subfamily. In terms of assembly, homodimer. It depends on Mg(2+) as a cofactor. Mn(2+) serves as cofactor.

It localises to the cytoplasm. The catalysed reaction is (2R,3S)-3-isopropylmalate + NAD(+) = 4-methyl-2-oxopentanoate + CO2 + NADH. Its pathway is amino-acid biosynthesis; L-leucine biosynthesis; L-leucine from 3-methyl-2-oxobutanoate: step 3/4. In terms of biological role, catalyzes the oxidation of 3-carboxy-2-hydroxy-4-methylpentanoate (3-isopropylmalate) to 3-carboxy-4-methyl-2-oxopentanoate. The product decarboxylates to 4-methyl-2 oxopentanoate. The protein is 3-isopropylmalate dehydrogenase of Xanthomonas campestris pv. campestris (strain 8004).